A 266-amino-acid chain; its full sequence is Ribosomal RNA small subunit methyltransferase A (266 aa).

S-adenosyl-L-methionine is bound by residues H13, L15, G40, E61, D85, and N104.

Belongs to the class I-like SAM-binding methyltransferase superfamily. rRNA adenine N(6)-methyltransferase family. RsmA subfamily.

Its subcellular location is the cytoplasm. It carries out the reaction adenosine(1518)/adenosine(1519) in 16S rRNA + 4 S-adenosyl-L-methionine = N(6)-dimethyladenosine(1518)/N(6)-dimethyladenosine(1519) in 16S rRNA + 4 S-adenosyl-L-homocysteine + 4 H(+). Its function is as follows. Specifically dimethylates two adjacent adenosines (A1518 and A1519) in the loop of a conserved hairpin near the 3'-end of 16S rRNA in the 30S particle. May play a critical role in biogenesis of 30S subunits. This Parabacteroides distasonis (strain ATCC 8503 / DSM 20701 / CIP 104284 / JCM 5825 / NCTC 11152) protein is Ribosomal RNA small subunit methyltransferase A.